Consider the following 664-residue polypeptide: DNA ligase (664 aa).

Residues aspartate 32–aspartate 36 and serine 80–leucine 81 each bind NAD(+). The active-site N6-AMP-lysine intermediate is lysine 122. Residues arginine 144, glutamate 178, and lysine 314 each contribute to the NAD(+) site. The Zn(2+) site is built by cysteine 407, cysteine 410, cysteine 423, and cysteine 429. In terms of domain architecture, BRCT spans isoleucine 587–lysine 664.

This sequence belongs to the NAD-dependent DNA ligase family. LigA subfamily. Mg(2+) serves as cofactor. Requires Mn(2+) as cofactor.

It catalyses the reaction NAD(+) + (deoxyribonucleotide)n-3'-hydroxyl + 5'-phospho-(deoxyribonucleotide)m = (deoxyribonucleotide)n+m + AMP + beta-nicotinamide D-nucleotide.. Its function is as follows. DNA ligase that catalyzes the formation of phosphodiester linkages between 5'-phosphoryl and 3'-hydroxyl groups in double-stranded DNA using NAD as a coenzyme and as the energy source for the reaction. It is essential for DNA replication and repair of damaged DNA. This Clostridium botulinum (strain Okra / Type B1) protein is DNA ligase.